We begin with the raw amino-acid sequence, 437 residues long: Tryptophan--tRNA ligase (437 aa).

Positions 74–82 (PSGKVHLGH) match the 'HIGH' region motif. The 'KMSKS' region signature appears at 321 to 325 (KMSSS).

It belongs to the class-I aminoacyl-tRNA synthetase family.

It localises to the cytoplasm. It carries out the reaction tRNA(Trp) + L-tryptophan + ATP = L-tryptophyl-tRNA(Trp) + AMP + diphosphate + H(+). In Methanosarcina acetivorans (strain ATCC 35395 / DSM 2834 / JCM 12185 / C2A), this protein is Tryptophan--tRNA ligase.